The sequence spans 182 residues: Oligoribonuclease (182 aa).

The Exonuclease domain maps to 8-171 (LIWIDLEMTG…DDIRESIKEL (164 aa)). Residue Tyr-129 is part of the active site.

It belongs to the oligoribonuclease family.

It is found in the cytoplasm. In terms of biological role, 3'-to-5' exoribonuclease specific for small oligoribonucleotides. In Haemophilus influenzae (strain ATCC 51907 / DSM 11121 / KW20 / Rd), this protein is Oligoribonuclease (orn).